The chain runs to 698 residues: Polyribonucleotide nucleotidyltransferase (698 aa).

Mg(2+)-binding residues include Asp485 and Asp491. A KH domain is found at 552–611 (PRITTIKINPEKIRDVIGKGGAVIRALTEETGTTIELDDDGTVKIASSNGEATKEAIRRI). The 69-residue stretch at 621 to 689 (GRVYNGKVIR…RQGRVRLSIK (69 aa)) folds into the S1 motif domain.

It belongs to the polyribonucleotide nucleotidyltransferase family. As to quaternary structure, component of the RNA degradosome, which is a multiprotein complex involved in RNA processing and mRNA degradation. Mg(2+) is required as a cofactor.

It localises to the cytoplasm. The enzyme catalyses RNA(n+1) + phosphate = RNA(n) + a ribonucleoside 5'-diphosphate. Functionally, involved in mRNA degradation. Catalyzes the phosphorolysis of single-stranded polyribonucleotides processively in the 3'- to 5'-direction. This chain is Polyribonucleotide nucleotidyltransferase, found in Shewanella denitrificans (strain OS217 / ATCC BAA-1090 / DSM 15013).